Reading from the N-terminus, the 559-residue chain is Dihydroxy-acid dehydratase (559 aa).

Residue Asp81 participates in Mg(2+) binding. Cys122 is a [2Fe-2S] cluster binding site. Positions 123 and 124 each coordinate Mg(2+). Lys124 carries the post-translational modification N6-carboxylysine. Residue Cys195 coordinates [2Fe-2S] cluster. Residue Glu448 participates in Mg(2+) binding. Catalysis depends on Ser474, which acts as the Proton acceptor.

It belongs to the IlvD/Edd family. As to quaternary structure, homodimer. It depends on [2Fe-2S] cluster as a cofactor. Requires Mg(2+) as cofactor.

The enzyme catalyses (2R)-2,3-dihydroxy-3-methylbutanoate = 3-methyl-2-oxobutanoate + H2O. It catalyses the reaction (2R,3R)-2,3-dihydroxy-3-methylpentanoate = (S)-3-methyl-2-oxopentanoate + H2O. Its pathway is amino-acid biosynthesis; L-isoleucine biosynthesis; L-isoleucine from 2-oxobutanoate: step 3/4. The protein operates within amino-acid biosynthesis; L-valine biosynthesis; L-valine from pyruvate: step 3/4. Its function is as follows. Functions in the biosynthesis of branched-chain amino acids. Catalyzes the dehydration of (2R,3R)-2,3-dihydroxy-3-methylpentanoate (2,3-dihydroxy-3-methylvalerate) into 2-oxo-3-methylpentanoate (2-oxo-3-methylvalerate) and of (2R)-2,3-dihydroxy-3-methylbutanoate (2,3-dihydroxyisovalerate) into 2-oxo-3-methylbutanoate (2-oxoisovalerate), the penultimate precursor to L-isoleucine and L-valine, respectively. This is Dihydroxy-acid dehydratase from Geobacillus kaustophilus (strain HTA426).